The sequence spans 162 residues: ATP synthase subunit b 1 (162 aa).

Residues 3–23 form a helical membrane-spanning segment; the sequence is FLDATFFAFVGLVLFLALVVY.

Belongs to the ATPase B chain family. In terms of assembly, F-type ATPases have 2 components, F(1) - the catalytic core - and F(0) - the membrane proton channel. F(1) has five subunits: alpha(3), beta(3), gamma(1), delta(1), epsilon(1). F(0) has three main subunits: a(1), b(2) and c(10-14). The alpha and beta chains form an alternating ring which encloses part of the gamma chain. F(1) is attached to F(0) by a central stalk formed by the gamma and epsilon chains, while a peripheral stalk is formed by the delta and b chains.

The protein resides in the cell inner membrane. Functionally, f(1)F(0) ATP synthase produces ATP from ADP in the presence of a proton or sodium gradient. F-type ATPases consist of two structural domains, F(1) containing the extramembraneous catalytic core and F(0) containing the membrane proton channel, linked together by a central stalk and a peripheral stalk. During catalysis, ATP synthesis in the catalytic domain of F(1) is coupled via a rotary mechanism of the central stalk subunits to proton translocation. In terms of biological role, component of the F(0) channel, it forms part of the peripheral stalk, linking F(1) to F(0). This chain is ATP synthase subunit b 1, found in Rhizobium johnstonii (strain DSM 114642 / LMG 32736 / 3841) (Rhizobium leguminosarum bv. viciae).